The sequence spans 583 residues: NudC domain-containing protein 1 (583 aa).

Phosphoserine is present on Ser8. The CS domain maps to 273–361 (IKEPLYYWQQ…NEGLTWPELV (89 aa)). Ser388 is subject to Phosphoserine.

As to expression, isoform 1 is specifically expressed in leukemias and a variety of solid tumor cell lines and is also detected in testis and heart. Isoform 2 is predominantly expressed in testis and weakly expressed in tumor cells.

The protein resides in the cytoplasm. The protein localises to the nucleus. In Homo sapiens (Human), this protein is NudC domain-containing protein 1.